Consider the following 447-residue polypeptide: Tubulin beta chain (447 aa).

GTP is bound by residues Q11, E69, S138, G142, T143, G144, N204, and N226. E69 contacts Mg(2+).

It belongs to the tubulin family. As to quaternary structure, dimer of alpha and beta chains. A typical microtubule is a hollow water-filled tube with an outer diameter of 25 nm and an inner diameter of 15 nM. Alpha-beta heterodimers associate head-to-tail to form protofilaments running lengthwise along the microtubule wall with the beta-tubulin subunit facing the microtubule plus end conferring a structural polarity. Microtubules usually have 13 protofilaments but different protofilament numbers can be found in some organisms and specialized cells. Mg(2+) serves as cofactor.

It localises to the cytoplasm. It is found in the cytoskeleton. In terms of biological role, tubulin is the major constituent of microtubules, a cylinder consisting of laterally associated linear protofilaments composed of alpha- and beta-tubulin heterodimers. Microtubules grow by the addition of GTP-tubulin dimers to the microtubule end, where a stabilizing cap forms. Below the cap, tubulin dimers are in GDP-bound state, owing to GTPase activity of alpha-tubulin. This Penicillium digitatum (Green mold) protein is Tubulin beta chain (TUB2).